The following is a 199-amino-acid chain: A-type ATP synthase subunit E (199 aa).

This sequence belongs to the V-ATPase E subunit family. As to quaternary structure, has multiple subunits with at least A(3), B(3), C, D, E, F, H, I and proteolipid K(x).

The protein resides in the cell membrane. Functionally, component of the A-type ATP synthase that produces ATP from ADP in the presence of a proton gradient across the membrane. This Pyrococcus abyssi (strain GE5 / Orsay) protein is A-type ATP synthase subunit E.